The following is a 205-amino-acid chain: tRNA 2-(methylsulfanyl)-N(6)-isopentenyladenosine(37) hydroxylase (205 aa).

Fe cation contacts are provided by Glu-38, Glu-69, His-72, Glu-122, Glu-151, and His-154.

This sequence belongs to the MiaE family. Homodimer. The cofactor is Fe cation.

It catalyses the reaction 2-methylsulfanyl-N(6)-dimethylallyladenosine(37) in tRNA + AH2 + O2 = N(6)-[(2E)-4-hydroxy-3-methylbut-2-en-1-yl]-2-(methylsulfanyl)adenosine(37) in tRNA + A + H2O. It functions in the pathway tRNA modification; 2-methylthio-N-6-(cis-hydroxy)isopentenyl adenosine-tRNA biosynthesis. In terms of biological role, involved in specific tRNA modification. Catalyzes the oxygen-dependent hydroxylation of 2-methylthio-N-6-isopentenyl adenosine (ms2i6A) to produce 2-methylthio-N-6-(cis-hydroxy)isopentenyl adenosine (ms2io6A) at position 37 in tRNAs. The protein is tRNA 2-(methylsulfanyl)-N(6)-isopentenyladenosine(37) hydroxylase of Pseudomonas putida (strain ATCC 47054 / DSM 6125 / CFBP 8728 / NCIMB 11950 / KT2440).